We begin with the raw amino-acid sequence, 582 residues long: Probable inorganic phosphate transporter 1-9 (582 aa).

Topologically, residues 1-23 (MAPRIRVLAALDQARTQYYHFKA) are cytoplasmic. The chain crosses the membrane as a helical span at residues 24–44 (IVIAGMGLFTDSYDLFCISPV). The Extracellular portion of the chain corresponds to 45-75 (MKIFGRVYYAPSGSVDGSGSGPGVTPPAVVS). The chain crosses the membrane as a helical span at residues 76-96 (ATVGVALLGAVAGNVVFGALG). Topologically, residues 97–103 (DRVGRRR) are cytoplasmic. The chain crosses the membrane as a helical span at residues 104–124 (VYGACLLLMVCSSVGSGLSVC). The Extracellular portion of the chain corresponds to 125–130 (RTRRCA). Residues 131–151 (LASLCFFRFLLGVGVGGDYPL) traverse the membrane as a helical segment. The Cytoplasmic portion of the chain corresponds to 152 to 165 (SATIMSEFANRRTR). Residues 166-186 (GAFIAAVFSMQGFGILVSSAV) traverse the membrane as a helical segment. The Extracellular segment spans residues 187-210 (TMAVAAAFDHYTGYPAPLDTPECA). Residues 211 to 231 (DLAWRIILMAGAVPAALTYYW) traverse the membrane as a helical segment. Over 232–307 (RMSMPETARY…RRFVRQHGRD (76 aa)) the chain is Cytoplasmic. Residues 308-328 (LFACAAAWFLLDIPYYSSTLF) traverse the membrane as a helical segment. Residues 329–354 (QSQIYRPWFPPAAKVNAFQEAFNVAK) lie on the Extracellular side of the membrane. Residues 355–375 (FQAVIAVASTIPGYFAAMLLI) form a helical membrane-spanning segment. The Cytoplasmic segment spans residues 376 to 385 (ERAGRRRLQM). A helical transmembrane segment spans residues 386–406 (AGFLLMAVFLFALAGPYDGYW). The Extracellular segment spans residues 407 to 415 (RDHAKTAGY). The helical transmembrane segment at 416–436 (IVLYSLTFFSANLGPNTTTFI) threads the bilayer. The Cytoplasmic segment spans residues 437 to 451 (LPAELFPARFRSTCH). A helical transmembrane segment spans residues 452-472 (GLSGAAGKLGALVGSIGFLWA). Residues 473–485 (SQQKDGAAAGHLP) lie on the Extracellular side of the membrane. A helical transmembrane segment spans residues 486-506 (GIGMMYALFVLGGICLLGLAL). Topologically, residues 507 to 582 (TYAFTPETMT…SPILPHRMSL (76 aa)) are cytoplasmic. The tract at residues 519–541 (LEENESSVQAQSQVGDGGSDAGN) is disordered.

It belongs to the major facilitator superfamily. Phosphate:H(+) symporter (TC 2.A.1.9) family. As to expression, expressed at low levels in roots.

Its subcellular location is the membrane. High-affinity transporter for external inorganic phosphate. This is Probable inorganic phosphate transporter 1-9 (PHT1-9) from Oryza sativa subsp. japonica (Rice).